The sequence spans 128 residues: Diacylglycerol kinase (128 aa).

Residue Glu34 coordinates a divalent metal cation. Helical transmembrane passes span 35-55 (SAFR…SYLT) and 58-78 (FLEW…ELIN). The active-site Proton acceptor is Glu75. An a divalent metal cation-binding site is contributed by Glu82. Residues 108–128 (LIGLIFWAFIWGRYLLTLYFN) form a helical membrane-spanning segment.

This sequence belongs to the bacterial diacylglycerol kinase family. Mg(2+) is required as a cofactor.

The protein resides in the cell inner membrane. It carries out the reaction a 1,2-diacyl-sn-glycerol + ATP = a 1,2-diacyl-sn-glycero-3-phosphate + ADP + H(+). Catalyzes the ATP-dependent phosphorylation of sn-l,2-diacylglycerol (DAG) to phosphatidic acid. Involved in the recycling of diacylglycerol produced as a by-product during membrane-derived oligosaccharide (MDO) biosynthesis. The chain is Diacylglycerol kinase (dgkA) from Helicobacter pylori (strain J99 / ATCC 700824) (Campylobacter pylori J99).